Here is a 129-residue protein sequence, read N- to C-terminus: Ribosome-binding factor A (129 aa).

The protein belongs to the RbfA family. As to quaternary structure, monomer. Binds 30S ribosomal subunits, but not 50S ribosomal subunits or 70S ribosomes.

The protein resides in the cytoplasm. Its function is as follows. One of several proteins that assist in the late maturation steps of the functional core of the 30S ribosomal subunit. Associates with free 30S ribosomal subunits (but not with 30S subunits that are part of 70S ribosomes or polysomes). Required for efficient processing of 16S rRNA. May interact with the 5'-terminal helix region of 16S rRNA. The protein is Ribosome-binding factor A of Thioalkalivibrio sulfidiphilus (strain HL-EbGR7).